The primary structure comprises 254 residues: Gamma-glutamyl-gamma-aminobutyrate hydrolase PuuD (254 aa).

A Glutamine amidotransferase type-1 domain is found at 16-250 (RNRLKGHATQ…ITACQHHIAE (235 aa)). Cys114 acts as the Nucleophile in catalysis. Active-site residues include His222 and Glu224.

The protein belongs to the peptidase C26 family. In terms of assembly, homodimer.

The enzyme catalyses 4-(gamma-L-glutamylamino)butanoate + H2O = 4-aminobutanoate + L-glutamate. It participates in amine and polyamine degradation; putrescine degradation; 4-aminobutanoate from putrescine: step 4/4. In terms of biological role, involved in the breakdown of putrescine via hydrolysis of the gamma-glutamyl linkage of gamma-glutamyl-gamma-aminobutyrate. This is Gamma-glutamyl-gamma-aminobutyrate hydrolase PuuD (puuD) from Escherichia coli (strain K12).